The following is a 277-amino-acid chain: Phosphoenolpyruvate synthase regulatory protein (277 aa).

157 to 164 (GVSRCGKT) is a binding site for ADP.

The protein belongs to the pyruvate, phosphate/water dikinase regulatory protein family. PSRP subfamily.

The catalysed reaction is [pyruvate, water dikinase] + ADP = [pyruvate, water dikinase]-phosphate + AMP + H(+). It catalyses the reaction [pyruvate, water dikinase]-phosphate + phosphate + H(+) = [pyruvate, water dikinase] + diphosphate. Bifunctional serine/threonine kinase and phosphorylase involved in the regulation of the phosphoenolpyruvate synthase (PEPS) by catalyzing its phosphorylation/dephosphorylation. The sequence is that of Phosphoenolpyruvate synthase regulatory protein from Salmonella agona (strain SL483).